A 22-amino-acid chain; its full sequence is Brevinin-2LTa (22 aa).

Expressed by the skin glands.

The protein localises to the secreted. Functionally, has antibacterial activity. This Rana latastei (Italian agile frog) protein is Brevinin-2LTa.